The following is a 313-amino-acid chain: Glutaminase (313 aa).

Residues Ser73, Asn123, Glu167, Asn174, Tyr198, Tyr249, and Val267 each coordinate substrate.

It belongs to the glutaminase family. As to quaternary structure, homotetramer.

It carries out the reaction L-glutamine + H2O = L-glutamate + NH4(+). The polypeptide is Glutaminase (Streptomyces avermitilis (strain ATCC 31267 / DSM 46492 / JCM 5070 / NBRC 14893 / NCIMB 12804 / NRRL 8165 / MA-4680)).